The chain runs to 307 residues: UDP-3-O-acyl-N-acetylglucosamine deacetylase (307 aa).

Positions 80, 239, and 243 each coordinate Zn(2+). H266 serves as the catalytic Proton donor.

It belongs to the LpxC family. The cofactor is Zn(2+).

The enzyme catalyses a UDP-3-O-[(3R)-3-hydroxyacyl]-N-acetyl-alpha-D-glucosamine + H2O = a UDP-3-O-[(3R)-3-hydroxyacyl]-alpha-D-glucosamine + acetate. It participates in glycolipid biosynthesis; lipid IV(A) biosynthesis; lipid IV(A) from (3R)-3-hydroxytetradecanoyl-[acyl-carrier-protein] and UDP-N-acetyl-alpha-D-glucosamine: step 2/6. Its function is as follows. Catalyzes the hydrolysis of UDP-3-O-myristoyl-N-acetylglucosamine to form UDP-3-O-myristoylglucosamine and acetate, the committed step in lipid A biosynthesis. This Neisseria gonorrhoeae (strain ATCC 700825 / FA 1090) protein is UDP-3-O-acyl-N-acetylglucosamine deacetylase.